A 306-amino-acid polypeptide reads, in one-letter code: Pre-mRNA-splicing factor cwf26 (306 aa).

Positions 130-152 (KAEERRKREEKSSNLDEEELRKS) are disordered. Residues 130 to 198 (KAEERRKREE…KEQQQGVVQV (69 aa)) adopt a coiled-coil conformation.

Belongs to the CWC26 family. In terms of assembly, belongs to the 40S cdc5-associated complex (or cwf complex), a spliceosome sub-complex reminiscent of a late-stage spliceosome composed of the U2, U5 and U6 snRNAs and at least brr2, cdc5, cwf2/prp3, cwf3/syf1, cwf4/syf3, cwf5/ecm2, spp42/cwf6, cwf7/spf27, cwf8, cwf9, cwf10, cwf11, cwf12, prp45/cwf13, cwf14, cwf15, cwf16, cwf17, cwf18, cwf19, cwf20, cwf21, cwf22, cwf23, cwf24, cwf25, cwf26, cyp7/cwf27, cwf28, cwf29/ist3, lea1, msl1, prp5/cwf1, prp10, prp12/sap130, prp17, prp22, sap61, sap62, sap114, sap145, slu7, smb1, smd1, smd3, smf1, smg1 and syf2.

The protein localises to the cytoplasm. Its subcellular location is the nucleus. Involved in mRNA splicing. This Schizosaccharomyces pombe (strain 972 / ATCC 24843) (Fission yeast) protein is Pre-mRNA-splicing factor cwf26 (cwf26).